A 215-amino-acid chain; its full sequence is Putative ribosome biogenesis protein slx9-like (215 aa).

Disordered stretches follow at residues 49–121 (IIPS…GLGM), 133–157 (DSMK…MSLK), and 189–215 (LQNQ…LKRK).

This sequence belongs to the SLX9 family.

The protein localises to the nucleus. It is found in the nucleolus. Functionally, involved in ribosome biogenesis. This is Putative ribosome biogenesis protein slx9-like from Dictyostelium discoideum (Social amoeba).